A 624-amino-acid polypeptide reads, in one-letter code: tRNA uridine 5-carboxymethylaminomethyl modification enzyme MnmG (624 aa).

FAD contacts are provided by residues 13 to 18 (GGGHAG), valine 125, and serine 180. Residue 273–287 (GPRYCPSIEDKIVRF) coordinates NAD(+). Glutamine 370 lines the FAD pocket.

It belongs to the MnmG family. As to quaternary structure, homodimer. Heterotetramer of two MnmE and two MnmG subunits. Requires FAD as cofactor.

Its subcellular location is the cytoplasm. In terms of biological role, NAD-binding protein involved in the addition of a carboxymethylaminomethyl (cmnm) group at the wobble position (U34) of certain tRNAs, forming tRNA-cmnm(5)s(2)U34. This Legionella pneumophila (strain Lens) protein is tRNA uridine 5-carboxymethylaminomethyl modification enzyme MnmG.